We begin with the raw amino-acid sequence, 399 residues long: Probable 3-ketosteroid-9-alpha-monooxygenase, oxygenase component (399 aa).

Residues Trp-26–Val-128 form the Rieske domain. The [2Fe-2S] cluster site is built by Cys-67, His-69, Cys-86, and His-89. The Fe cation site is built by Asn-175, His-181, His-186, and Asp-307.

In terms of assembly, homotrimer. The two-component system 3-ketosteroid-9-alpha-monooxygenase is composed of an oxygenase component KshA and a reductase component KshB. It depends on [2Fe-2S] cluster as a cofactor. The cofactor is Fe cation.

Functionally, could catalyze the introduction of a 9alpha-hydroxyl moiety into the ring B of 3-ketosteroid substrates. The chain is Probable 3-ketosteroid-9-alpha-monooxygenase, oxygenase component from Rhodococcus rhodochrous.